We begin with the raw amino-acid sequence, 528 residues long: Calcium-dependent protein kinase 4 (528 aa).

The tract at residues 1-36 (MGQEVSSVNNTKNEHHKTNKKSLKGGNERHEMKESS) is disordered. A lipid anchor (N-myristoyl glycine) is attached at Gly-2. A compositionally biased stretch (basic residues) spans 14–23 (EHHKTNKKSL). The 259-residue stretch at 71–329 (KGIKILGKGS…RDALEHEWIK (259 aa)) folds into the Protein kinase domain. Residues 76 to 84 (LGKGSFGEV) and Lys-99 each bind ATP. Residue Asp-193 is the Proton acceptor of the active site. The short motif at 350-358 (NIRQFQSTQ) is the J domain autoinhibitory motif element. Positions 350 to 386 (NIRQFQSTQKLAQAALLYMGSKLTTIDETKELTKIFK) are j domain. A J domain EF-hand interaction motif motif is present at residues 359-368 (KLAQAALLYM). 4 consecutive EF-hand domains span residues 376 to 411 (DETK…LLKL), 427 to 458 (EVDQ…RKLL), 459 to 494 (LSTE…SDVS), and 496 to 528 (ECWK…LCNY). Residues Asp-389, Asn-391, Asp-393, Gln-395, Glu-400, Asp-436, Asp-438, Asn-440, Tyr-442, Glu-447, Asp-472, Asp-474, Ser-476, Lys-478, Glu-483, Asp-506, Asn-508, Asp-510, Glu-512, and Glu-517 each coordinate Ca(2+).

It belongs to the protein kinase superfamily. Ser/Thr protein kinase family. CDPK subfamily. As to quaternary structure, may interact with the pre-replication MCM complex prior male gametogenesis activation. Mg(2+) serves as cofactor. Myristoylated; myristoylation may target it to different subcellular compartments. During male gametogenesis, myristoylation is required to initiate DNA replication but not for mitotic spindle assembly or axoneme activation. In terms of processing, not palmitoylated. Post-translationally, may be autophosphorylated on Thr-234 in vitro.

It localises to the cytoplasm. It is found in the cell membrane. The catalysed reaction is L-seryl-[protein] + ATP = O-phospho-L-seryl-[protein] + ADP + H(+). It catalyses the reaction L-threonyl-[protein] + ATP = O-phospho-L-threonyl-[protein] + ADP + H(+). With respect to regulation, activated by calcium. Upon calcium binding to the EF-hand domains, the C-terminus of the junction domain (J domain) undergoes a conformational change which results in the dissociation of the pseudo-substrate inhibitory motif from the catalytic domain. This, in turn, may facilitate the autophosphorylation of the activation loop at Thr-234, which leads to the kinase activation. Intracellular calcium increase is triggered by xanthurenic acid (XA), a small mosquito molecule that induces the differentiation of specialized transmission stages, the gametocytes, into male and female gametes. Activated by a decrease in temperature (20 degrees Celsius) and an increase in pH (7.6) occurring when the parasite is ingested by in the mosquito. Functionally, calcium-dependent protein kinase which acts as a sensor and effector of intracellular Ca(2+) levels probably in part downstream of cGMP-activated PKG kinase. Plays a central role in the host erythrocytes and hepatocytes infection cycles, sexual reproduction and mosquito transmission of the parasite. During the liver stage, involved in sporozoite motility and thus in sporozoite invasion of host hepatocytes, probably together with CDPK1 and CDPK5. Involved in merosome egress from host hepatocytes, probably together with CDPK5. During the asexual blood stage, involved in merozoite invasion of host erythrocytes and motility by stabilizing the inner membrane complex, a structure below the plasma membrane which acts as an anchor for the glidosome, an acto-myosin motor. Required for cell cycle progression in the male gametocyte. During male gametogenesis in the mosquito gut, required to initiate the first round of DNA replication, probably by facilitating the assembly of the pre-replicative MCM complex, to assemble the first mitotic spindle and, at the end of gametogenesis, to initiate axoneme motility, cytokinesis and subsequent exflagellation. For each of these steps, may phosphorylate SOC1, SOC2 and SOC3, respectively. Together with CDPK1, regulates ookinete gliding in the mosquito host midgut. The protein is Calcium-dependent protein kinase 4 of Plasmodium falciparum (isolate 3D7).